The sequence spans 405 residues: Tryptophan synthase beta chain (405 aa).

At Lys-86 the chain carries N6-(pyridoxal phosphate)lysine.

Belongs to the TrpB family. Tetramer of two alpha and two beta chains. Pyridoxal 5'-phosphate serves as cofactor.

It carries out the reaction (1S,2R)-1-C-(indol-3-yl)glycerol 3-phosphate + L-serine = D-glyceraldehyde 3-phosphate + L-tryptophan + H2O. Its pathway is amino-acid biosynthesis; L-tryptophan biosynthesis; L-tryptophan from chorismate: step 5/5. Functionally, the beta subunit is responsible for the synthesis of L-tryptophan from indole and L-serine. The sequence is that of Tryptophan synthase beta chain from Shewanella piezotolerans (strain WP3 / JCM 13877).